A 147-amino-acid polypeptide reads, in one-letter code: Large ribosomal subunit protein uL15 (147 aa).

The segment at 1–46 (MSIRLENLSYTPGARKEKHRKGRGHAAGKGKQAGRGQSGQKKRSTV) is disordered. Residues 16-28 (KEKHRKGRGHAAG) show a composition bias toward basic residues.

It belongs to the universal ribosomal protein uL15 family. As to quaternary structure, part of the 50S ribosomal subunit.

Its function is as follows. Binds to the 23S rRNA. The polypeptide is Large ribosomal subunit protein uL15 (Mesomycoplasma hyopneumoniae (strain 7448) (Mycoplasma hyopneumoniae)).